A 326-amino-acid chain; its full sequence is Transposase InsH for insertion sequence element IS5A (326 aa).

Belongs to the transposase 11 family.

Involved in the transposition of the insertion sequence IS5. In Escherichia coli (strain K12), this protein is Transposase InsH for insertion sequence element IS5A (insH1).